We begin with the raw amino-acid sequence, 504 residues long: One cut domain family member 2 (504 aa).

Disordered stretches follow at residues Leu-29–Ala-95, Lys-166–Gly-189, Glu-274–Glu-332, and Trp-485–Ala-504. Residues Pro-35 to Gly-56 are compositionally biased toward gly residues. The span at His-168–Arg-186 shows a compositional bias: basic residues. Positions Val-324–Ala-410 form a DNA-binding region, CUT. The segment at residues Gln-426 to Trp-485 is a DNA-binding region (homeobox). Low complexity predominate over residues Ser-490–Ala-504.

It belongs to the CUT homeobox family.

It is found in the nucleus. In terms of biological role, transcriptional activator. Activates the transcription of a number of liver genes such as HNF3B. The chain is One cut domain family member 2 (ONECUT2) from Homo sapiens (Human).